A 144-amino-acid chain; its full sequence is Nucleoside diphosphate kinase (144 aa).

The ATP site is built by Lys-9, Phe-57, Arg-85, Thr-91, Arg-102, and Asn-112. His-115 (pros-phosphohistidine intermediate) is an active-site residue.

This sequence belongs to the NDK family. As to quaternary structure, homotetramer. Requires Mg(2+) as cofactor.

It localises to the cytoplasm. The catalysed reaction is a 2'-deoxyribonucleoside 5'-diphosphate + ATP = a 2'-deoxyribonucleoside 5'-triphosphate + ADP. It catalyses the reaction a ribonucleoside 5'-diphosphate + ATP = a ribonucleoside 5'-triphosphate + ADP. Major role in the synthesis of nucleoside triphosphates other than ATP. The ATP gamma phosphate is transferred to the NDP beta phosphate via a ping-pong mechanism, using a phosphorylated active-site intermediate. The chain is Nucleoside diphosphate kinase from Chlamydia pneumoniae (Chlamydophila pneumoniae).